Reading from the N-terminus, the 300-residue chain is F-box/LRR-repeat protein 15 (300 aa).

N-acetylmethionine is present on Met-1. An F-box domain is found at 19–66; sequence FLDLPWEDVLLPHVLNRVPLRQLLRLQRVSRAFRSLVQLHLAGLRRFD. Residues 113–269 form an interaction with SMURF1 region; sequence NPQLRSVALG…ESSLSRLRKR (157 aa). LRR repeat units follow at residues 141–162, 167–188, 194–215, 220–241, and 246–267; these read RLQRLSLAHCDWVDGLALRGLA, ALEELDLTACRQLKDEAIVYLA, GLRSLSLAVNANVGDAAVQELA, ELHHLDLTGCLRVGSDGVRTLA, and VLRSLRVRHCHHVAESSLSRLR.

The protein belongs to the FBXL15 family. As to quaternary structure, part of the SCF (SKP1-CUL1-F-box) E3 ubiquitin-protein ligase complex SCF(FBXL15) composed of CUL1, SKP1, RBX1 and FBXL15.

It is found in the cytoplasm. It functions in the pathway protein modification; protein ubiquitination. Functionally, substrate recognition component of a SCF (SKP1-CUL1-F-box protein) E3 ubiquitin-protein ligase complex which mediates the ubiquitination and subsequent proteasomal degradation of SMURF1, thereby acting as a positive regulator of the BMP signaling pathway. Required for dorsal/ventral pattern formation and bone mass maintenance. Also mediates ubiquitination of SMURF2 and WWP2. This is F-box/LRR-repeat protein 15 (FBXL15) from Homo sapiens (Human).